Here is a 206-residue protein sequence, read N- to C-terminus: Histidine biosynthesis bifunctional protein HisIE (206 aa).

A phosphoribosyl-AMP cyclohydrolase region spans residues 1 to 117; sequence MGSETTAAGD…SCFPTAPSQF (117 aa). Positions 118–206 are phosphoribosyl-ATP pyrophosphohydrolase; sequence LGSLDALIAE…AVALLESRHK (89 aa).

In the N-terminal section; belongs to the PRA-CH family. It in the C-terminal section; belongs to the PRA-PH family.

The protein resides in the cytoplasm. The enzyme catalyses 1-(5-phospho-beta-D-ribosyl)-ATP + H2O = 1-(5-phospho-beta-D-ribosyl)-5'-AMP + diphosphate + H(+). It carries out the reaction 1-(5-phospho-beta-D-ribosyl)-5'-AMP + H2O = 1-(5-phospho-beta-D-ribosyl)-5-[(5-phospho-beta-D-ribosylamino)methylideneamino]imidazole-4-carboxamide. It functions in the pathway amino-acid biosynthesis; L-histidine biosynthesis; L-histidine from 5-phospho-alpha-D-ribose 1-diphosphate: step 2/9. Its pathway is amino-acid biosynthesis; L-histidine biosynthesis; L-histidine from 5-phospho-alpha-D-ribose 1-diphosphate: step 3/9. In Xanthomonas campestris pv. campestris (strain ATCC 33913 / DSM 3586 / NCPPB 528 / LMG 568 / P 25), this protein is Histidine biosynthesis bifunctional protein HisIE.